The sequence spans 429 residues: Bifunctional protein GlmU (429 aa).

Residues 1-223 are pyrophosphorylase; that stretch reads MKTSILILAA…EDEFMGINDK (223 aa). Residues 8–11, lysine 22, and 81–82 contribute to the UDP-N-acetyl-alpha-D-glucosamine site; these read LAAG and GT. Aspartate 102 is a Mg(2+) binding site. The UDP-N-acetyl-alpha-D-glucosamine site is built by glycine 135, glutamate 149, asparagine 164, and asparagine 221. Asparagine 221 is a Mg(2+) binding site. Positions 224-244 are linker; that stretch reads FELSIAENFMQEKIKKYWMQQ. The tract at residues 245-429 is N-acetyltransferase; the sequence is GVIFHLPQST…KDYYYKKFQK (185 aa). UDP-N-acetyl-alpha-D-glucosamine is bound by residues arginine 308 and lysine 325. The active-site Proton acceptor is the histidine 336. UDP-N-acetyl-alpha-D-glucosamine-binding residues include tyrosine 339 and asparagine 350. Acetyl-CoA contacts are provided by residues 359-360, serine 378, alanine 396, and arginine 413; that span reads NY.

In the N-terminal section; belongs to the N-acetylglucosamine-1-phosphate uridyltransferase family. This sequence in the C-terminal section; belongs to the transferase hexapeptide repeat family. In terms of assembly, homotrimer. The cofactor is Mg(2+).

It is found in the cytoplasm. It carries out the reaction alpha-D-glucosamine 1-phosphate + acetyl-CoA = N-acetyl-alpha-D-glucosamine 1-phosphate + CoA + H(+). The catalysed reaction is N-acetyl-alpha-D-glucosamine 1-phosphate + UTP + H(+) = UDP-N-acetyl-alpha-D-glucosamine + diphosphate. It functions in the pathway nucleotide-sugar biosynthesis; UDP-N-acetyl-alpha-D-glucosamine biosynthesis; N-acetyl-alpha-D-glucosamine 1-phosphate from alpha-D-glucosamine 6-phosphate (route II): step 2/2. The protein operates within nucleotide-sugar biosynthesis; UDP-N-acetyl-alpha-D-glucosamine biosynthesis; UDP-N-acetyl-alpha-D-glucosamine from N-acetyl-alpha-D-glucosamine 1-phosphate: step 1/1. Its pathway is bacterial outer membrane biogenesis; LPS lipid A biosynthesis. Its function is as follows. Catalyzes the last two sequential reactions in the de novo biosynthetic pathway for UDP-N-acetylglucosamine (UDP-GlcNAc). The C-terminal domain catalyzes the transfer of acetyl group from acetyl coenzyme A to glucosamine-1-phosphate (GlcN-1-P) to produce N-acetylglucosamine-1-phosphate (GlcNAc-1-P), which is converted into UDP-GlcNAc by the transfer of uridine 5-monophosphate (from uridine 5-triphosphate), a reaction catalyzed by the N-terminal domain. This chain is Bifunctional protein GlmU, found in Campylobacter jejuni (strain RM1221).